The chain runs to 363 residues: 3-isopropylmalate dehydrogenase (363 aa).

Residue 79–92 (GPKWEHLPPNDQPE) participates in NAD(+) binding. Substrate is bound by residues R100, R110, R139, and D228. 3 residues coordinate Mg(2+): D228, D252, and D256. 286–298 (GSAPDIAGKNIAN) serves as a coordination point for NAD(+).

It belongs to the isocitrate and isopropylmalate dehydrogenases family. LeuB type 1 subfamily. In terms of assembly, homodimer. Requires Mg(2+) as cofactor. It depends on Mn(2+) as a cofactor.

It is found in the cytoplasm. It catalyses the reaction (2R,3S)-3-isopropylmalate + NAD(+) = 4-methyl-2-oxopentanoate + CO2 + NADH. Its pathway is amino-acid biosynthesis; L-leucine biosynthesis; L-leucine from 3-methyl-2-oxobutanoate: step 3/4. In terms of biological role, catalyzes the oxidation of 3-carboxy-2-hydroxy-4-methylpentanoate (3-isopropylmalate) to 3-carboxy-4-methyl-2-oxopentanoate. The product decarboxylates to 4-methyl-2 oxopentanoate. The sequence is that of 3-isopropylmalate dehydrogenase from Vibrio parahaemolyticus serotype O3:K6 (strain RIMD 2210633).